Consider the following 503-residue polypeptide: Aspartyl/glutamyl-tRNA(Asn/Gln) amidotransferase subunit B (503 aa).

The protein belongs to the GatB/GatE family. GatB subfamily. In terms of assembly, heterotrimer of A, B and C subunits.

It catalyses the reaction L-glutamyl-tRNA(Gln) + L-glutamine + ATP + H2O = L-glutaminyl-tRNA(Gln) + L-glutamate + ADP + phosphate + H(+). It carries out the reaction L-aspartyl-tRNA(Asn) + L-glutamine + ATP + H2O = L-asparaginyl-tRNA(Asn) + L-glutamate + ADP + phosphate + 2 H(+). Allows the formation of correctly charged Asn-tRNA(Asn) or Gln-tRNA(Gln) through the transamidation of misacylated Asp-tRNA(Asn) or Glu-tRNA(Gln) in organisms which lack either or both of asparaginyl-tRNA or glutaminyl-tRNA synthetases. The reaction takes place in the presence of glutamine and ATP through an activated phospho-Asp-tRNA(Asn) or phospho-Glu-tRNA(Gln). This is Aspartyl/glutamyl-tRNA(Asn/Gln) amidotransferase subunit B from Roseobacter denitrificans (strain ATCC 33942 / OCh 114) (Erythrobacter sp. (strain OCh 114)).